The sequence spans 150 residues: Photosystem II extrinsic protein V (150 aa).

A signal peptide spans 1–20 (MIRVIMLLVLVWMTPMISWA). Cys50, Cys53, His54, and His105 together coordinate heme c.

Belongs to the cytochrome c family. PsbV subfamily. PSII is composed of 1 copy each of membrane proteins PsbA, PsbB, PsbC, PsbD, PsbE, PsbF, PsbH, PsbI, PsbJ, PsbK, PsbL, PsbM, PsbT, PsbY, PsbZ, Psb30/Ycf12, at least 3 peripheral proteins of the oxygen-evolving complex and a large number of cofactors. It forms dimeric complexes. The extrinsic subunits in red algae are PsbO (OEC33), PsbQ', cytochrome c-550 and PsbU. Heme c serves as cofactor.

The protein resides in the plastid. It is found in the chloroplast thylakoid membrane. In terms of biological role, one of the extrinsic, lumenal subunits of photosystem II (PSII). PSII is a light-driven water plastoquinone oxidoreductase, using light energy to abstract electrons from H(2)O, generating a proton gradient subsequently used for ATP formation. The extrinsic proteins stabilize the structure of photosystem II oxygen-evolving complex (OEC), the ion environment of oxygen evolution and protect the OEC against heat-induced inactivation. The polypeptide is Photosystem II extrinsic protein V (Cyanidioschyzon merolae (strain NIES-3377 / 10D) (Unicellular red alga)).